The sequence spans 384 residues: MAWSQRIEQALVKRRLDGQYRQRHPTGQADGRTLSVAGHNYLNFSANDYLGLSHDGRVVRAWQQGAERYGVGAGGSAHVTGYRAPQAELEHQLADWLGYRRALLFISGFAANQAVIAAMMAKNDRIFADKLCHASLLEAASLSPATLRRFGHNQPSALAKLLAAEGEGETLVVTEGIFSMDGDRAALKPIHQLARDRDGWLLVDDAHGVGVCGEQGRGSCWQQGVQPELLIVTFGKAFGVSGAALLCSDATAEYLLQFARHLIYSTAMPPAQACAIQAALGCVQQGDDLRQRLAANITRFRQGARGLRGQLASSDSAIQPLIVGDEQKVLGLARRLRDRRCWVTAIRPPTVPPGTSRLRITLSAAHRENDIDHLLEALHATDGE.

A substrate-binding site is contributed by arginine 21. Glycine 108–phenylalanine 109 contributes to the pyridoxal 5'-phosphate binding site. Histidine 133 contacts substrate. Serine 179, histidine 207, and threonine 233 together coordinate pyridoxal 5'-phosphate. Lysine 236 is modified (N6-(pyridoxal phosphate)lysine). Substrate is bound at residue threonine 350.

The protein belongs to the class-II pyridoxal-phosphate-dependent aminotransferase family. BioF subfamily. Homodimer. Requires pyridoxal 5'-phosphate as cofactor.

The enzyme catalyses 6-carboxyhexanoyl-[ACP] + L-alanine + H(+) = (8S)-8-amino-7-oxononanoate + holo-[ACP] + CO2. The protein operates within cofactor biosynthesis; biotin biosynthesis. In terms of biological role, catalyzes the decarboxylative condensation of pimeloyl-[acyl-carrier protein] and L-alanine to produce 8-amino-7-oxononanoate (AON), [acyl-carrier protein], and carbon dioxide. The sequence is that of 8-amino-7-oxononanoate synthase from Erwinia tasmaniensis (strain DSM 17950 / CFBP 7177 / CIP 109463 / NCPPB 4357 / Et1/99).